The chain runs to 150 residues: Lipoprotein signal peptidase (150 aa).

Transmembrane regions (helical) follow at residues 59-79 (VFVG…RYLP) and 84-101 (LLRL…GNLI). Catalysis depends on residues Asp-111 and Asp-125. Residues 117-137 (IWPVFNLADMAIVFGVIILCW) traverse the membrane as a helical segment.

This sequence belongs to the peptidase A8 family.

It localises to the cell membrane. The enzyme catalyses Release of signal peptides from bacterial membrane prolipoproteins. Hydrolyzes -Xaa-Yaa-Zaa-|-(S,diacylglyceryl)Cys-, in which Xaa is hydrophobic (preferably Leu), and Yaa (Ala or Ser) and Zaa (Gly or Ala) have small, neutral side chains.. The protein operates within protein modification; lipoprotein biosynthesis (signal peptide cleavage). This protein specifically catalyzes the removal of signal peptides from prolipoproteins. The protein is Lipoprotein signal peptidase of Moorella thermoacetica (strain ATCC 39073 / JCM 9320).